The sequence spans 431 residues: Ribosome assembly protein SQT1 (431 aa).

WD repeat units lie at residues 63–102 (KHTD…PKFA), 107–146 (GYGE…AQWK), 149–192 (SQMQ…GSLE), 199–243 (VHQQ…QLFK), 309–348 (ELDA…VRHK), and 350–387 (VLED…EKFV).

As to quaternary structure, interacts strongly with QSR1. Part of an oligomeric protein complex that is loosely associated with ribosomes.

Its function is as follows. May be involved in the late step of 60S ribosomal subunit assembly or modification in the cytoplasm. This is Ribosome assembly protein SQT1 (SQT1) from Saccharomyces cerevisiae (strain ATCC 204508 / S288c) (Baker's yeast).